The sequence spans 364 residues: Pectinesterase (364 aa).

Positions 1–22 are cleaved as a signal peptide; that stretch reads MSCIAVEAVLLGILLYIPIVLS. N-linked (GlcNAc...) asparagine glycosylation occurs at N103. Residue D220 is part of the active site.

It localises to the secreted. It carries out the reaction [(1-&gt;4)-alpha-D-galacturonosyl methyl ester](n) + n H2O = [(1-&gt;4)-alpha-D-galacturonosyl](n) + n methanol + n H(+). It participates in glycan metabolism; pectin degradation; 2-dehydro-3-deoxy-D-gluconate from pectin: step 1/5. Functionally, catalyzes the demethylesterification of homogalacturonan components of pectin. The sequence is that of Pectinesterase from Parthenium hysterophorus (Santa Maria feverfew).